The primary structure comprises 1516 residues: AP-4 complex accessory subunit RUSC2 (1516 aa).

Disordered stretches follow at residues A33 to L105, L202 to S224, W229 to Q248, S331 to C351, L404 to Y445, and G478 to L511. Positions L66–I81 are enriched in polar residues. Residues D82–R92 show a composition bias toward basic and acidic residues. The segment covering G206–A217 has biased composition (gly residues). A compositionally biased stretch (basic and acidic residues) spans M333–G344. The segment covering S405–C420 has biased composition (low complexity). Pro residues predominate over residues S428–S440. A compositionally biased stretch (polar residues) spans V480 to R493. S536, S543, and S559 each carry phosphoserine. Disordered stretches follow at residues G550 to D588, L646 to R688, R727 to E836, and E868 to L889. Positions G567–A579 are enriched in polar residues. S656 carries the phosphoserine modification. Positions Q729 to P746 are enriched in low complexity. Residue S781 is modified to Phosphoserine. Positions P791–C801 are enriched in low complexity. Positions N1031–Q1175 constitute an RUN domain. Disordered stretches follow at residues R1210–R1261, I1286–D1408, and Q1422–P1449. Positions D1219–K1230 are enriched in basic and acidic residues. The span at G1237–A1251 shows a compositional bias: acidic residues. The span at E1355–G1364 shows a compositional bias: basic and acidic residues. Residues S1368 and S1380 each carry the phosphoserine modification. Basic and acidic residues predominate over residues S1426 to Q1437. Positions S1447 to T1506 constitute an SH3 domain.

In terms of assembly, associated component of the adapter-like complex 4 (AP-4). Interacts with active RAB1A and RAB1B, and with GOLGA2. Interacts (via RUN domain) with RAB35 (GTP-bound form); the interaction recruits RUSC2 to the plasma membrane. Widely expressed, with highest levels in brain and testis.

Its subcellular location is the cytoplasm. It is found in the cytosol. It localises to the cell membrane. Functionally, associates with the adapter-like complex 4 (AP-4) and may therefore play a role in vesicular trafficking of proteins at the trans-Golgi network. This Homo sapiens (Human) protein is AP-4 complex accessory subunit RUSC2.